The sequence spans 752 residues: Probable GTP-binding protein OBGC1, chloroplastic (752 aa).

A chloroplast-targeting transit peptide spans 1–90 (MAPAVAVVAA…RFPTANPEPR (90 aa)). The interval 19 to 121 (FSAEARRNTK…EEDEVELGLR (103 aa)) is disordered. The segment covering 26-36 (NTKGSRSKRGS) has biased composition (basic residues). Acidic residues predominate over residues 103–117 (GDDEEDEEEEEDEVE). The Obg domain occupies 294–452 (MRCFDTAKIY…MWIDLELKLV (159 aa)). Residues 453–621 (ADVGIVGAPN…VVLAAYKVLQ (169 aa)) enclose the OBG-type G domain. GTP is bound by residues 459-466 (GAPNAGKS), 484-488 (FTTLL), 506-509 (DLPG), 573-576 (NKMD), and 602-604 (SAM). Residues Ser466 and Thr486 each contribute to the Mg(2+) site. The 80-residue stretch at 649 to 728 (ERRAPMNEFE…VGEMEMVWTD (80 aa)) folds into the OCT domain. The segment at 728–752 (DEPSKTRSSKTMNSKDDSVRWPEFG) is disordered. Residues 740–752 (NSKDDSVRWPEFG) show a composition bias toward basic and acidic residues.

The protein belongs to the TRAFAC class OBG-HflX-like GTPase superfamily. OBG GTPase family. It depends on Mg(2+) as a cofactor.

It localises to the plastid. Its subcellular location is the chloroplast. Its function is as follows. Probable GTP-binding protein that may play a role in chloroplast development. This Oryza sativa subsp. indica (Rice) protein is Probable GTP-binding protein OBGC1, chloroplastic (OBGC1).